The primary structure comprises 391 residues: Phosphoglycerate kinase (391 aa).

Substrate-binding positions include 21–23 (DLN), Arg-36, 59–62 (HLGR), Arg-113, and Arg-146. ATP-binding positions include Lys-197, Glu-319, and 345–348 (GGDT).

This sequence belongs to the phosphoglycerate kinase family. Monomer.

The protein localises to the cytoplasm. It carries out the reaction (2R)-3-phosphoglycerate + ATP = (2R)-3-phospho-glyceroyl phosphate + ADP. The protein operates within carbohydrate degradation; glycolysis; pyruvate from D-glyceraldehyde 3-phosphate: step 2/5. This chain is Phosphoglycerate kinase, found in Shewanella sp. (strain ANA-3).